Consider the following 708-residue polypeptide: Lactotransferrin (708 aa).

The N-terminal stretch at 1–19 is a signal peptide; sequence MKLLFLALLSLLALGPSLA. 2 Transferrin-like domains span residues 25 to 352 and 364 to 693; these read VRWC…NLKE and VVWC…NLRQ. 2 cysteine pairs are disulfide-bonded: cysteine 28–cysteine 64 and cysteine 38–cysteine 55. Fe(3+) is bound at residue aspartate 79. Residue arginine 92 is part of the active site. Residue tyrosine 111 participates in Fe(3+) binding. Cystine bridges form between cysteine 134–cysteine 217, cysteine 176–cysteine 192, cysteine 179–cysteine 202, cysteine 189–cysteine 200, and cysteine 250–cysteine 264. Threonine 136 provides a ligand contact to hydrogencarbonate. An N-linked (GlcNAc...) asparagine glycan is attached at asparagine 139. Arginine 140, alanine 142, and glycine 143 together coordinate hydrogencarbonate. Tyrosine 211 lines the Fe(3+) pocket. Histidine 272 contributes to the Fe(3+) binding site. Serine 278 functions as the Nucleophile in the catalytic mechanism. Cystine bridges form between cysteine 367-cysteine 399 and cysteine 377-cysteine 390. Residue asparagine 385 is glycosylated (N-linked (GlcNAc...) asparagine). Positions 414 and 452 each coordinate Fe(3+). Intrachain disulfides connect cysteine 476-cysteine 551, cysteine 510-cysteine 524, cysteine 521-cysteine 534, and cysteine 592-cysteine 606. Residues threonine 478, arginine 482, alanine 484, and glycine 485 each contribute to the hydrogencarbonate site. An N-linked (GlcNAc...) asparagine glycan is attached at asparagine 495. Tyrosine 545 contributes to the Fe(3+) binding site. Histidine 614 serves as a coordination point for Fe(3+).

The protein belongs to the transferrin family. Monomer. Found in a complex with LTF, CLU, EPPIN and SEMG1. Interacts with prey activated coagulation factor X; the interaction inhibits coagulation factor X catalytic activity. Found in a complex with MPO and LTF; interacts directly with CP, allows Fe(3+) incorporation into LTF and activation of CP ferroxidase activity. N-glycosylated. Glycosylation is important for draculin anticoagulant activity. Probably also O-glycosylated. As to expression, expressed in the submaxillary gland and secreted in the saliva (at protein level).

It localises to the secreted. Transferrins are iron binding transport proteins which can bind two Fe(3+) ions in association with the binding of an anion, usually bicarbonate. Functionally, major iron-binding and multifunctional protein found in exocrine fluids such as breast milk and mucosal secretions. Has antimicrobial activity. Antimicrobial properties may include bacteriostasis, which is related to its ability to sequester free iron and thus inhibit microbial growth, as well as direct bactericidal properties leading to the release of lipopolysaccharides from the bacterial outer membrane. May have anabolic, differentiating and anti-apoptotic effects on osteoblasts and may also inhibit osteoclastogenesis, possibly playing a role in the regulation of bone growth. May interfere with the lipopolysaccharide (LPS)-stimulated TLR4 signaling. In terms of biological role, the lactotransferrin transferrin-like domain 1 functions as a serine protease of the peptidase S60 family that cuts arginine rich regions. This function contributes to the antimicrobial activity. Shows a preferential cleavage at -Arg-Ser-Arg-Arg-|- and -Arg-Arg-Ser-Arg-|-, and of Z-Phe-Arg-|-aminomethylcoumarin sites. Its function is as follows. Acts as an anticoagulant of the blood coagulation cascade of the bat's prey by inhibiting coagulation factor IX and activated coagulation factor X. This Desmodus rotundus (Vampire bat) protein is Lactotransferrin.